The primary structure comprises 539 residues: CTP synthase (539 aa).

The amidoligase domain stretch occupies residues 1–267 (MTKYIFVTGG…DQKVVDFLHI (267 aa)). Serine 13 serves as a coordination point for CTP. A UTP-binding site is contributed by serine 13. 14 to 19 (SLGKGI) contacts ATP. Tyrosine 54 is an L-glutamine binding site. Residue aspartate 71 coordinates ATP. Positions 71 and 141 each coordinate Mg(2+). CTP-binding positions include 148-150 (DME), 188-193 (KSKPTQ), and lysine 224. UTP contacts are provided by residues 188–193 (KSKPTQ) and lysine 224. Positions 294–537 (KITLVGKYVE…IGAASGLQVD (244 aa)) constitute a Glutamine amidotransferase type-1 domain. Position 356 (glycine 356) interacts with L-glutamine. Cysteine 383 (nucleophile; for glutamine hydrolysis) is an active-site residue. Residues 384-387 (LGMQ), glutamate 407, and arginine 465 each bind L-glutamine. Catalysis depends on residues histidine 510 and glutamate 512.

This sequence belongs to the CTP synthase family. Homotetramer.

It catalyses the reaction UTP + L-glutamine + ATP + H2O = CTP + L-glutamate + ADP + phosphate + 2 H(+). It carries out the reaction L-glutamine + H2O = L-glutamate + NH4(+). The enzyme catalyses UTP + NH4(+) + ATP = CTP + ADP + phosphate + 2 H(+). The protein operates within pyrimidine metabolism; CTP biosynthesis via de novo pathway; CTP from UDP: step 2/2. With respect to regulation, allosterically activated by GTP, when glutamine is the substrate; GTP has no effect on the reaction when ammonia is the substrate. The allosteric effector GTP functions by stabilizing the protein conformation that binds the tetrahedral intermediate(s) formed during glutamine hydrolysis. Inhibited by the product CTP, via allosteric rather than competitive inhibition. Its function is as follows. Catalyzes the ATP-dependent amination of UTP to CTP with either L-glutamine or ammonia as the source of nitrogen. Regulates intracellular CTP levels through interactions with the four ribonucleotide triphosphates. In Lactobacillus delbrueckii subsp. bulgaricus (strain ATCC 11842 / DSM 20081 / BCRC 10696 / JCM 1002 / NBRC 13953 / NCIMB 11778 / NCTC 12712 / WDCM 00102 / Lb 14), this protein is CTP synthase.